The following is a 779-amino-acid chain: Pleckstrin homology domain-containing family A member 4 (779 aa).

The PH domain occupies 54–153 (PVHIRGWLHK…WLRALGRASR (100 aa)). Disordered stretches follow at residues 152–352 (SRAE…LPGP), 492–670 (AGLG…EGHR), and 691–764 (MTGG…LPQD). A Phosphoserine modification is found at Ser-164. A compositionally biased stretch (basic and acidic residues) spans 184-193 (SRGEEGRISE). Over residues 315-332 (QHWSQEPRTQAHSGSPTY) the composition is skewed to polar residues. The segment covering 525-535 (PESLELSSPRS) has biased composition (low complexity). Residues 536 to 551 (PETDWGRPPGGDKDLA) are compositionally biased toward basic and acidic residues. Ser-559 carries the post-translational modification Phosphoserine. The span at 594-603 (QLERMRRNQE) shows a compositional bias: basic and acidic residues. Residues 647–663 (LRSSGSWSSPRNTTPYL) are compositionally biased toward polar residues. A compositionally biased stretch (pro residues) spans 704–724 (PGVPLPPSDPTRQETPPPRSP).

As to expression, highly expressed in melanoma. Detected at low levels in heart, skeletal muscle, kidney, liver and small intestine.

It is found in the cytoplasm. It localises to the membrane. Functionally, binds specifically to phosphatidylinositol 3-phosphate (PtdIns3P), but not to other phosphoinositides. In Homo sapiens (Human), this protein is Pleckstrin homology domain-containing family A member 4 (PLEKHA4).